We begin with the raw amino-acid sequence, 228 residues long: 7-cyano-7-deazaguanine synthase (228 aa).

7-17 (LSGGMDSLVTT) serves as a coordination point for ATP. Positions 187, 195, 198, and 201 each coordinate Zn(2+).

This sequence belongs to the QueC family. The cofactor is Zn(2+).

The catalysed reaction is 7-carboxy-7-deazaguanine + NH4(+) + ATP = 7-cyano-7-deazaguanine + ADP + phosphate + H2O + H(+). It functions in the pathway purine metabolism; 7-cyano-7-deazaguanine biosynthesis. In terms of biological role, catalyzes the ATP-dependent conversion of 7-carboxy-7-deazaguanine (CDG) to 7-cyano-7-deazaguanine (preQ(0)). The polypeptide is 7-cyano-7-deazaguanine synthase (Chlorobium chlorochromatii (strain CaD3)).